A 599-amino-acid polypeptide reads, in one-letter code: Elongation factor 4 (599 aa).

A tr-type G domain is found at 4–186 (SKIRNFSIIA…SIVEKVPAPK (183 aa)). GTP contacts are provided by residues 16-21 (DHGKST) and 133-136 (NKVD).

Belongs to the TRAFAC class translation factor GTPase superfamily. Classic translation factor GTPase family. LepA subfamily.

The protein resides in the cell inner membrane. The enzyme catalyses GTP + H2O = GDP + phosphate + H(+). In terms of biological role, required for accurate and efficient protein synthesis under certain stress conditions. May act as a fidelity factor of the translation reaction, by catalyzing a one-codon backward translocation of tRNAs on improperly translocated ribosomes. Back-translocation proceeds from a post-translocation (POST) complex to a pre-translocation (PRE) complex, thus giving elongation factor G a second chance to translocate the tRNAs correctly. Binds to ribosomes in a GTP-dependent manner. This is Elongation factor 4 from Syntrophotalea carbinolica (strain DSM 2380 / NBRC 103641 / GraBd1) (Pelobacter carbinolicus).